We begin with the raw amino-acid sequence, 468 residues long: Ribulose bisphosphate carboxylase large chain (468 aa).

Lys5 carries the N6,N6,N6-trimethyllysine modification. Positions 114 and 164 each coordinate substrate. Catalysis depends on Lys166, which acts as the Proton acceptor. Residue Lys168 participates in substrate binding. Residues Lys192, Asp194, and Glu195 each coordinate Mg(2+). Lys192 is subject to N6-carboxylysine. His285 functions as the Proton acceptor in the catalytic mechanism. Positions 286, 318, and 370 each coordinate substrate.

Belongs to the RuBisCO large chain family. Type I subfamily. As to quaternary structure, heterohexadecamer of 8 large chains and 8 small chains; disulfide-linked. The disulfide link is formed within the large subunit homodimers. Mg(2+) is required as a cofactor. The disulfide bond which can form in the large chain dimeric partners within the hexadecamer appears to be associated with oxidative stress and protein turnover.

Its subcellular location is the plastid. It is found in the chloroplast. The enzyme catalyses 2 (2R)-3-phosphoglycerate + 2 H(+) = D-ribulose 1,5-bisphosphate + CO2 + H2O. It carries out the reaction D-ribulose 1,5-bisphosphate + O2 = 2-phosphoglycolate + (2R)-3-phosphoglycerate + 2 H(+). RuBisCO catalyzes two reactions: the carboxylation of D-ribulose 1,5-bisphosphate, the primary event in carbon dioxide fixation, as well as the oxidative fragmentation of the pentose substrate in the photorespiration process. Both reactions occur simultaneously and in competition at the same active site. This Solandra grandiflora (Chalice vine) protein is Ribulose bisphosphate carboxylase large chain.